Here is a 563-residue protein sequence, read N- to C-terminus: Light-independent protochlorophyllide reductase subunit B (563 aa).

Asp-36 is a [4Fe-4S] cluster binding site. Residue Asp-349 is the Proton donor of the active site. Residue 484–485 (GM) coordinates substrate.

The protein belongs to the ChlB/BchB/BchZ family. As to quaternary structure, protochlorophyllide reductase is composed of three subunits; ChlL, ChlN and ChlB. Forms a heterotetramer of two ChlB and two ChlN subunits. The cofactor is [4Fe-4S] cluster.

The protein localises to the plastid. The protein resides in the chloroplast. The enzyme catalyses chlorophyllide a + oxidized 2[4Fe-4S]-[ferredoxin] + 2 ADP + 2 phosphate = protochlorophyllide a + reduced 2[4Fe-4S]-[ferredoxin] + 2 ATP + 2 H2O. It functions in the pathway porphyrin-containing compound metabolism; chlorophyll biosynthesis (light-independent). Functionally, component of the dark-operative protochlorophyllide reductase (DPOR) that uses Mg-ATP and reduced ferredoxin to reduce ring D of protochlorophyllide (Pchlide) to form chlorophyllide a (Chlide). This reaction is light-independent. The NB-protein (ChlN-ChlB) is the catalytic component of the complex. The sequence is that of Light-independent protochlorophyllide reductase subunit B from Chlamydomonas moewusii (Chlamydomonas eugametos).